Consider the following 152-residue polypeptide: Small ribosomal subunit protein uS15 (152 aa).

The protein belongs to the universal ribosomal protein uS15 family. In terms of assembly, part of the 30S ribosomal subunit.

In Methanospirillum hungatei JF-1 (strain ATCC 27890 / DSM 864 / NBRC 100397 / JF-1), this protein is Small ribosomal subunit protein uS15.